Consider the following 141-residue polypeptide: Large ribosomal subunit protein uL11 (141 aa).

Belongs to the universal ribosomal protein uL11 family. As to quaternary structure, part of the ribosomal stalk of the 50S ribosomal subunit. Interacts with L10 and the large rRNA to form the base of the stalk. L10 forms an elongated spine to which L12 dimers bind in a sequential fashion forming a multimeric L10(L12)X complex. In terms of processing, one or more lysine residues are methylated.

In terms of biological role, forms part of the ribosomal stalk which helps the ribosome interact with GTP-bound translation factors. This Tropheryma whipplei (strain TW08/27) (Whipple's bacillus) protein is Large ribosomal subunit protein uL11.